The primary structure comprises 338 residues: Holliday junction branch migration complex subunit RuvB (338 aa).

The tract at residues 4–184 (SDRLVSGKAR…FGISHHLQYY (181 aa)) is large ATPase domain (RuvB-L). ATP contacts are provided by residues arginine 24, glycine 65, lysine 68, threonine 69, threonine 70, 131–133 (EDY), arginine 174, tyrosine 184, and arginine 221. Threonine 69 is a Mg(2+) binding site. The tract at residues 185–255 (HHDELTQIVM…LADEALELLA (71 aa)) is small ATPAse domain (RuvB-S). The interval 258–338 (HLGFDALDRR…NIEVPDGRNS (81 aa)) is head domain (RuvB-H). Residues arginine 294, arginine 313, and arginine 318 each coordinate DNA.

The protein belongs to the RuvB family. Homohexamer. Forms an RuvA(8)-RuvB(12)-Holliday junction (HJ) complex. HJ DNA is sandwiched between 2 RuvA tetramers; dsDNA enters through RuvA and exits via RuvB. An RuvB hexamer assembles on each DNA strand where it exits the tetramer. Each RuvB hexamer is contacted by two RuvA subunits (via domain III) on 2 adjacent RuvB subunits; this complex drives branch migration. In the full resolvosome a probable DNA-RuvA(4)-RuvB(12)-RuvC(2) complex forms which resolves the HJ.

The protein resides in the cytoplasm. It carries out the reaction ATP + H2O = ADP + phosphate + H(+). Its function is as follows. The RuvA-RuvB-RuvC complex processes Holliday junction (HJ) DNA during genetic recombination and DNA repair, while the RuvA-RuvB complex plays an important role in the rescue of blocked DNA replication forks via replication fork reversal (RFR). RuvA specifically binds to HJ cruciform DNA, conferring on it an open structure. The RuvB hexamer acts as an ATP-dependent pump, pulling dsDNA into and through the RuvAB complex. RuvB forms 2 homohexamers on either side of HJ DNA bound by 1 or 2 RuvA tetramers; 4 subunits per hexamer contact DNA at a time. Coordinated motions by a converter formed by DNA-disengaged RuvB subunits stimulates ATP hydrolysis and nucleotide exchange. Immobilization of the converter enables RuvB to convert the ATP-contained energy into a lever motion, pulling 2 nucleotides of DNA out of the RuvA tetramer per ATP hydrolyzed, thus driving DNA branch migration. The RuvB motors rotate together with the DNA substrate, which together with the progressing nucleotide cycle form the mechanistic basis for DNA recombination by continuous HJ branch migration. Branch migration allows RuvC to scan DNA until it finds its consensus sequence, where it cleaves and resolves cruciform DNA. In Dichelobacter nodosus (strain VCS1703A), this protein is Holliday junction branch migration complex subunit RuvB.